Consider the following 204-residue polypeptide: Holliday junction resolvase RecU (204 aa).

Threonine 89, aspartate 91, aspartate 104, and glutamine 123 together coordinate Mg(2+).

The protein belongs to the RecU family. Mg(2+) serves as cofactor.

The protein localises to the cytoplasm. The catalysed reaction is Endonucleolytic cleavage at a junction such as a reciprocal single-stranded crossover between two homologous DNA duplexes (Holliday junction).. In terms of biological role, endonuclease that resolves Holliday junction intermediates in genetic recombination. Cleaves mobile four-strand junctions by introducing symmetrical nicks in paired strands. Promotes annealing of linear ssDNA with homologous dsDNA. Required for DNA repair, homologous recombination and chromosome segregation. This is Holliday junction resolvase RecU from Leuconostoc mesenteroides subsp. mesenteroides (strain ATCC 8293 / DSM 20343 / BCRC 11652 / CCM 1803 / JCM 6124 / NCDO 523 / NBRC 100496 / NCIMB 8023 / NCTC 12954 / NRRL B-1118 / 37Y).